We begin with the raw amino-acid sequence, 1303 residues long: Latent-transforming growth factor beta-binding protein 3 (1303 aa).

Residues 1–43 form the signal peptide; the sequence is MPGPRGAAGGLAPEMRGAGAAGLLALLLLLLLLLLGLGGRVEG. N-linked (GlcNAc...) asparagine glycosylation is present at N89. The 33-residue stretch at 109–141 folds into the EGF-like 1 domain; it reads RVVVCPLPCMNGGQCSSRNQCLCPPDFTGRFCQ. 6 disulfide bridges follow: C113–C123, C117–C129, C131–C140, C279–C303, C289–C316, and C304–C319. Residues 247 to 282 form a disordered region; sequence SSNAESAAPSQHLLPHPKPSHPRPPTQKPLGRCFQD. A TB 1 domain is found at 277-331; the sequence is GRCFQDTLPKQPCGSNPLPGLTKQEDCCGSIGTAWGQSKCHKCPQLQYTGVQKPG. An N-linked (GlcNAc...) asparagine glycan is attached at N349. The EGF-like 2; calcium-binding domain maps to 355–395; the sequence is DINECAMPGVCRHGDCLNNPGSYRCVCPPGHSLGPSRTQCI. 7 disulfide bridges follow: C359–C370, C365–C379, C381–C394, C405–C428, C415–C440, C429–C443, and C430–C455. The 53-residue stretch at 403 to 455 folds into the TB 2 domain; sequence SLCFRLVSPEHQCQHPLTTRLTRQLCCCSVGKAWGARCQRCPTDGTAAFKEIC. The interval 478-552 is disordered; it reads FSLFLHPDGP…ISRPSPPTMR (75 aa). Over residues 529–540 the composition is skewed to low complexity; the sequence is PTATTTPARPYP. The 42-residue stretch at 574-615 folds into the EGF-like 3 domain; that stretch reads ETDECRLNQNICGHGECVPGPPDYSCHCNPGYRSHPQHRYCV. Intrachain disulfides connect C578-C590, C585-C599, C601-C614, C620-C632, C625-C641, C664-C676, C670-C685, C687-C701, C748-C759, C754-C768, C770-C783, C789-C800, C795-C809, C811-C824, C830-C841, C836-C850, C852-C864, C870-C883, C877-C892, C894-C907, C919-C942, C929-C954, C943-C959, C944-C971, C997-C1010, C1005-C1019, C1021-C1034, C1040-C1051, C1046-C1060, C1062-C1075, C1086-C1097, C1092-C1106, C1108-C1121, C1138-C1162, C1148-C1174, C1163-C1177, and C1164-C1186. Positions 616-659 constitute an EGF-like 4; calcium-binding domain; sequence DVNECEAEPCGPGRGICMNTGGSYNCHCNRGYRLHVGAGGRSCV. The 43-residue stretch at 660–702 folds into the EGF-like 5; calcium-binding domain; it reads DLNECAKPHLCGDGGFCINFPGHYKCNCYPGYRLKASRPPVCE. The 41-residue stretch at 744 to 784 folds into the EGF-like 6; calcium-binding domain; sequence DVNECAEGSPCSPGWCENLPGSFRCTCAQGYAPAPDGRSCL. The region spanning 785 to 825 is the EGF-like 7; calcium-binding domain; the sequence is DVDECEAGDVCDNGICSNTPGSFQCQCLSGYHLSRDRSHCE. The EGF-like 8; calcium-binding domain occupies 826-865; that stretch reads DIDECDFPAACIGGDCINTNGSYRCLCPQGHRLVGGRKCQ. An N-linked (GlcNAc...) asparagine glycan is attached at N845. The region spanning 866–908 is the EGF-like 9; calcium-binding domain; it reads DIDECSQDPSLCLPHGACKNLQGSYVCVCDEGFTPTQDQHGCE. The TB 3 domain maps to 917 to 971; the sequence is KECYLNFDDTVFCDSVLATNVTQQECCCSLGAGWGDHCEIYPCPVYSSAEFHSLC. The N-linked (GlcNAc...) asparagine glycan is linked to N936. Positions 993–1035 constitute an EGF-like 10; calcium-binding domain; the sequence is DIDECMLFGSEICKEGKCVNTQPGYECYCKQGFYYDGNLLECV. In terms of domain architecture, EGF-like 11; calcium-binding spans 1036–1076; that stretch reads DVDECLDESNCRNGVCENTRGGYRCACTPPAEYSPAQRQCL. Positions 1082-1122 constitute an EGF-like 12; calcium-binding domain; the sequence is DVDECQDPAACRPGRCVNLPGSYRCECRPPWVPGPSGRDCQ. The 51-residue stretch at 1136 to 1186 folds into the TB 4 domain; it reads DVCWSQRGEDGMCAGPLAGPALTFDDCCCRQGRGWGAQCRPCPPRGAGSHC. Residues 1188–1198 are compositionally biased toward polar residues; that stretch reads TSQSESNSFWD. The disordered stretch occupies residues 1188–1219; sequence TSQSESNSFWDTSPLLLGKPPRDEDSSEEDSD. The EGF-like 13; calcium-binding domain maps to 1254-1298; the sequence is DIDECRELNQRGLLCKSERCVNTSGSFRCVCKAGFARSRPHGACV. 2 disulfides stabilise this stretch: C1258/C1273 and C1268/C1282. The N-linked (GlcNAc...) asparagine glycan is linked to N1275.

It belongs to the LTBP family. In terms of assembly, forms part of the large latent transforming growth factor beta precursor complex; removal is essential for activation of complex. Interacts with EFEMP2. In terms of processing, contains hydroxylated asparagine residues. Two intrachain disulfide bonds from the TB3 domain are rearranged upon TGFB1 binding, and form interchain bonds with TGFB1 propeptide, anchoring it to the extracellular matrix. In terms of tissue distribution, isoform 2: Expressed prominently in heart, skeletal muscle, prostate, testis, small intestine and ovary. Isoform 1: Strongly expressed in pancreas and liver.

The protein resides in the secreted. It is found in the extracellular space. The protein localises to the extracellular matrix. Its function is as follows. Key regulator of transforming growth factor beta (TGFB1, TGFB2 and TGFB3) that controls TGF-beta activation by maintaining it in a latent state during storage in extracellular space. Associates specifically via disulfide bonds with the Latency-associated peptide (LAP), which is the regulatory chain of TGF-beta, and regulates integrin-dependent activation of TGF-beta. The polypeptide is Latent-transforming growth factor beta-binding protein 3 (LTBP3) (Homo sapiens (Human)).